Here is a 418-residue protein sequence, read N- to C-terminus: Zinc finger protein 566 (418 aa).

In terms of domain architecture, KRAB spans 6–77 (VMFSDVSVDF…DRELTRGQWP (72 aa)). Residues 169–193 (KFCASKEYRKTFRHGSQFATHEIIH) form a C2H2-type 1; degenerate zinc finger. 7 consecutive C2H2-type zinc fingers follow at residues 199 to 221 (YECK…QKIH), 227 to 249 (FECK…HRIH), 255 to 277 (YECK…QRIH), 283 to 305 (YECK…QRIH), 311 to 333 (YECK…QRIH), 339 to 361 (YECK…QRIH), and 367 to 389 (YECK…HRIH). Glycyl lysine isopeptide (Lys-Gly) (interchain with G-Cter in SUMO2) cross-links involve residues Lys-314 and Lys-328.

It belongs to the krueppel C2H2-type zinc-finger protein family.

It is found in the nucleus. In terms of biological role, may be involved in transcriptional regulation. The chain is Zinc finger protein 566 (ZNF566) from Pan troglodytes (Chimpanzee).